We begin with the raw amino-acid sequence, 228 residues long: Derlin-3 (228 aa).

Residues 1–22 (MAGQRLAAGFLQVPAVTRAYTA) lie on the Cytoplasmic side of the membrane. The helical transmembrane segment at 23–43 (ACVLTTAAVQLELLSPFQLYF) threads the bilayer. Over 44–57 (NPHLVFRKFQVWRL) the chain is Lumenal. Residues 58 to 78 (ITTFLFFGPLGFGFFFNMLFV) form a helical membrane-spanning segment. At 79-98 (FRYCRMLEEGSFRGRKADFV) the chain is on the cytoplasmic side. A helical transmembrane segment spans residues 99 to 119 (FMFLFGGVLMTLLGFLGSLFF). At 120–168 (LGQALMAMLVYVWSRRSPHVRVNFFGLLNFQAPFLPWALMGFSLLLGNS) the chain is on the lumenal side. The helical transmembrane segment at 169-189 (VVTDLLGILVGHIYYFLEDVF) threads the bilayer. The Cytoplasmic segment spans residues 190–228 (PNQPGGKRLLLTPSVLKLLLDDPQEDPDYLPLPEEQPEL).

It belongs to the derlin family. As to quaternary structure, forms homo- and heterooligomers with DERL2 and, to a lesser extent, with DERL1. Interacts with VCP and EDEM1. Interacts with SELENOK and SELENOS. Interacts with the signal recognition particle/SRP and the SRP receptor; in the process of endoplasmic reticulum stress-induced pre-emptive quality control. Highly expressed in spleen, lung, liver, spleen and testis. Expressed at intermediate level in kidney. Weakly or not expressed in brain, heart and skeletal muscle.

It localises to the endoplasmic reticulum membrane. In terms of biological role, functional component of endoplasmic reticulum-associated degradation (ERAD) for misfolded lumenal glycoproteins, but not that of misfolded nonglycoproteins. May act by forming a channel that allows the retrotranslocation of misfolded glycoproteins into the cytosol where they are ubiquitinated and degraded by the proteasome. May mediate the interaction between VCP and the misfolded glycoproteins. May be involved in endoplasmic reticulum stress-induced pre-emptive quality control, a mechanism that selectively attenuates the translocation of newly synthesized proteins into the endoplasmic reticulum and reroutes them to the cytosol for proteasomal degradation. In Mus musculus (Mouse), this protein is Derlin-3.